The chain runs to 156 residues: Small ribosomal subunit protein uS7 (156 aa).

This sequence belongs to the universal ribosomal protein uS7 family. Part of the 30S ribosomal subunit. Contacts proteins S9 and S11.

One of the primary rRNA binding proteins, it binds directly to 16S rRNA where it nucleates assembly of the head domain of the 30S subunit. Is located at the subunit interface close to the decoding center, probably blocks exit of the E-site tRNA. The chain is Small ribosomal subunit protein uS7 from Brevibacillus brevis (strain 47 / JCM 6285 / NBRC 100599).